Here is a 167-residue protein sequence, read N- to C-terminus: Bacterial non-heme ferritin (167 aa).

The region spanning 1 to 145 (MLSKEVVKLL…GIVDKIKLIG (145 aa)) is the Ferritin-like diiron domain. Fe cation-binding residues include E17, E50, H53, E94, and Q127.

It belongs to the ferritin family. Prokaryotic subfamily. Homooligomer of 24 subunits that assemble into a spherical protein shell (12 +/- 1 nM diameter) that can sequester at least 2000 iron atoms.

It is found in the cytoplasm. The enzyme catalyses 4 Fe(2+) + O2 + 6 H2O = 4 iron(III) oxide-hydroxide + 12 H(+). Iron-storage protein. This Campylobacter jejuni subsp. jejuni serotype O:2 (strain ATCC 700819 / NCTC 11168) protein is Bacterial non-heme ferritin (ftn).